Consider the following 396-residue polypeptide: MSEFIAENRGADAITRPNWSAVFSVAFCVACLIIVEFLPVSLLTPMAQDLGISEGVAGQSVTVTAFVAMFASLFITQTIQATDRRYVVILFAVLLTLSCLLVSFANSFSLLLIGRACLGLALGGFWAMSASLTMRLVPPRTVPKALSVIFGAVSIALVIAAPLGCFLGELIGWRNVFNAAAAMGVLCIFWIIKSLPSLPGEPSHQKQNTFRLLQRPGVMAGMIAIFMSFAGQFAFFTYIRPVYMTLAGFGVDGLTLVLLSFGIASFVGTSLSSFILKRSVKLALAGAPFVLALSALVLTLWGSDKIVATGVAIIWGLTFALIPVGWSTWITRSLADQAEKAGSIQVAVIQLANTCGAAIGGYALDNIGLTSPLMLSGTLMLLTALLVTAKVKMKKS.

Residues 1–21 are Cytoplasmic-facing; that stretch reads MSEFIAENRGADAITRPNWSA. Residues 22–42 traverse the membrane as a helical segment; it reads VFSVAFCVACLIIVEFLPVSL. The Periplasmic segment spans residues 43-54; sequence LTPMAQDLGISE. A helical membrane pass occupies residues 55-75; it reads GVAGQSVTVTAFVAMFASLFI. The Cytoplasmic portion of the chain corresponds to 76–85; that stretch reads TQTIQATDRR. Residues 86–106 form a helical membrane-spanning segment; the sequence is YVVILFAVLLTLSCLLVSFAN. A topological domain (periplasmic) is located at residue Ser-107. Residues 108–128 traverse the membrane as a helical segment; that stretch reads FSLLLIGRACLGLALGGFWAM. Topologically, residues 129–147 are cytoplasmic; the sequence is SASLTMRLVPPRTVPKALS. A helical transmembrane segment spans residues 148–168; it reads VIFGAVSIALVIAAPLGCFLG. At 169–175 the chain is on the periplasmic side; sequence ELIGWRN. A helical membrane pass occupies residues 176–196; it reads VFNAAAAMGVLCIFWIIKSLP. The Cytoplasmic portion of the chain corresponds to 197-215; it reads SLPGEPSHQKQNTFRLLQR. Residues 216 to 236 traverse the membrane as a helical segment; it reads PGVMAGMIAIFMSFAGQFAFF. Topologically, residues 237–255 are periplasmic; the sequence is TYIRPVYMTLAGFGVDGLT. The helical transmembrane segment at 256 to 276 threads the bilayer; it reads LVLLSFGIASFVGTSLSSFIL. The Cytoplasmic portion of the chain corresponds to 277-281; sequence KRSVK. The chain crosses the membrane as a helical span at residues 282–302; it reads LALAGAPFVLALSALVLTLWG. Residues 303 to 305 are Periplasmic-facing; it reads SDK. Residues 306–326 form a helical membrane-spanning segment; the sequence is IVATGVAIIWGLTFALIPVGW. Residues 327 to 343 are Cytoplasmic-facing; that stretch reads STWITRSLADQAEKAGS. A helical transmembrane segment spans residues 344 to 364; sequence IQVAVIQLANTCGAAIGGYAL. The Periplasmic segment spans residues 365 to 366; it reads DN. The chain crosses the membrane as a helical span at residues 367-387; that stretch reads IGLTSPLMLSGTLMLLTALLV. At 388–396 the chain is on the cytoplasmic side; sequence TAKVKMKKS.

This sequence belongs to the major facilitator superfamily. DHA1 family. NepI (TC 2.A.1.2.26) subfamily.

The protein localises to the cell inner membrane. The enzyme catalyses inosine(in) + H(+)(out) = inosine(out) + H(+)(in). It catalyses the reaction guanosine(in) + H(+)(out) = guanosine(out) + H(+)(in). Its function is as follows. Involved in the efflux of purine ribonucleosides, such as inosine and guanosine. This is Purine ribonucleoside efflux pump NepI from Escherichia coli O157:H7.